The primary structure comprises 266 residues: MTDVQKILKIVKQHMFKPKQTLARNEYKEAIVVPLGINEVQDLSDFTEEEKQLLINNDGWDVATLEQVYQFIMKTASWMASSHGGQSAPPPMSYFRQQQQPLPPQQRIYPQLNQTTTLQPQPQQPIIVNPIPAPAPAPATNNNNSLCSRYQICDIGSLQGVNDENLVFFYPSHTLMDKTKLLSVVLNFSNPVVGEYKVQMVNALNTTSPPRDIHKFTGTKSNVIVISLSEVLTTQNSVYFKMTPTPVDAKGNRPLIRMQVSMECSK.

This sequence belongs to the ascovirus HvAV ORF59 family.

This is an uncharacterized protein from Trichoplusia ni ascovirus 2c (TnAV-2c).